The primary structure comprises 256 residues: 2,3,4,5-tetrahydropyridine-2,6-dicarboxylate N-acetyltransferase (256 aa).

It belongs to the transferase hexapeptide repeat family. DapH subfamily.

The enzyme catalyses (S)-2,3,4,5-tetrahydrodipicolinate + acetyl-CoA + H2O = L-2-acetamido-6-oxoheptanedioate + CoA. It participates in amino-acid biosynthesis; L-lysine biosynthesis via DAP pathway; LL-2,6-diaminopimelate from (S)-tetrahydrodipicolinate (acetylase route): step 1/3. In terms of biological role, catalyzes the transfer of an acetyl group from acetyl-CoA to tetrahydrodipicolinate. This is 2,3,4,5-tetrahydropyridine-2,6-dicarboxylate N-acetyltransferase from Lactococcus lactis subsp. cremoris (strain MG1363).